A 219-amino-acid polypeptide reads, in one-letter code: Elongation factor Ts (219 aa).

The interval 81 to 84 (SDFV) is involved in Mg(2+) ion dislocation from EF-Tu.

This sequence belongs to the EF-Ts family.

Its subcellular location is the cytoplasm. Associates with the EF-Tu.GDP complex and induces the exchange of GDP to GTP. It remains bound to the aminoacyl-tRNA.EF-Tu.GTP complex up to the GTP hydrolysis stage on the ribosome. This chain is Elongation factor Ts, found in Koribacter versatilis (strain Ellin345).